The sequence spans 367 residues: Leucine dehydrogenase (367 aa).

Lys-80 is an active-site residue. 180–186 contributes to the NAD(+) binding site; sequence GVGNVAY.

This sequence belongs to the Glu/Leu/Phe/Val dehydrogenases family. As to quaternary structure, homohexamer.

The catalysed reaction is L-leucine + NAD(+) + H2O = 4-methyl-2-oxopentanoate + NH4(+) + NADH + H(+). The protein operates within amino-acid degradation; L-leucine degradation; 4-methyl-2-oxopentanoate from L-leucine (dehydrogenase route): step 1/1. Catalyzes the reversible deamination of L-leucine to 4-methyl-2-oxopentanoate. The sequence is that of Leucine dehydrogenase (ldh) from Geobacillus stearothermophilus (Bacillus stearothermophilus).